The chain runs to 436 residues: GTPase Der (436 aa).

EngA-type G domains lie at Pro-4–Val-167 and Ile-175–Asn-351. GTP contacts are provided by residues Gly-10–Ser-17, Asp-57–Ile-61, Asn-119–Asp-122, Gly-181–Ser-188, Asp-229–Met-233, and Asn-294–Asp-297. Residues Arg-352 to Lys-436 form the KH-like domain.

Belongs to the TRAFAC class TrmE-Era-EngA-EngB-Septin-like GTPase superfamily. EngA (Der) GTPase family. Associates with the 50S ribosomal subunit.

GTPase that plays an essential role in the late steps of ribosome biogenesis. The polypeptide is GTPase Der (Streptococcus thermophilus (strain CNRZ 1066)).